Here is a 167-residue protein sequence, read N- to C-terminus: NADH-quinone oxidoreductase subunit B (167 aa).

C40, C41, C105, and C134 together coordinate [4Fe-4S] cluster.

Belongs to the complex I 20 kDa subunit family. In terms of assembly, NDH-1 is composed of 14 different subunits. Subunits NuoB, C, D, E, F, and G constitute the peripheral sector of the complex. Requires [4Fe-4S] cluster as cofactor.

The protein resides in the cell inner membrane. The enzyme catalyses a quinone + NADH + 5 H(+)(in) = a quinol + NAD(+) + 4 H(+)(out). Functionally, NDH-1 shuttles electrons from NADH, via FMN and iron-sulfur (Fe-S) centers, to quinones in the respiratory chain. The immediate electron acceptor for the enzyme in this species is believed to be ubiquinone. Couples the redox reaction to proton translocation (for every two electrons transferred, four hydrogen ions are translocated across the cytoplasmic membrane), and thus conserves the redox energy in a proton gradient. The polypeptide is NADH-quinone oxidoreductase subunit B (Campylobacter jejuni (strain RM1221)).